Reading from the N-terminus, the 383-residue chain is Hippurate hydrolase (383 aa).

It belongs to the peptidase M20 family.

It catalyses the reaction N-benzoylglycine + H2O = benzoate + glycine. In terms of biological role, cleaves hippuric acid into benzoic acid and glycine. The sequence is that of Hippurate hydrolase from Campylobacter jejuni subsp. jejuni serotype O:2 (strain ATCC 700819 / NCTC 11168).